Here is a 526-residue protein sequence, read N- to C-terminus: Alpha-ketoglutaric semialdehyde dehydrogenase (526 aa).

NADP(+) contacts are provided by residues 159-160, 185-188, and 240-241; these read SN, KAHS, and GS. The Proton acceptor role is filled by E264. The Nucleophile role is filled by C301. Residue E393 participates in NADP(+) binding.

The protein belongs to the aldehyde dehydrogenase family.

The catalysed reaction is 2,5-dioxopentanoate + NADP(+) + H2O = 2-oxoglutarate + NADPH + 2 H(+). Its pathway is carbohydrate acid metabolism; D-glucarate degradation. In terms of biological role, catalyzes the NAD(P)(+)-dependent oxidation of alpha-ketoglutaric semialdehyde (alphaKGSA) to alpha-ketoglutarate in the D-glutarate degradation pathway. This is Alpha-ketoglutaric semialdehyde dehydrogenase from Acinetobacter baylyi (strain ATCC 33305 / BD413 / ADP1).